Here is a 261-residue protein sequence, read N- to C-terminus: Phosphonates import ATP-binding protein PhnC (261 aa).

An ABC transporter domain is found at 8-253; sequence LRVENLSKTY…WFRRIYGEGA (246 aa). 41–48 is a binding site for ATP; that stretch reads GLSGSGKS.

It belongs to the ABC transporter superfamily. Phosphonates importer (TC 3.A.1.9.1) family. In terms of assembly, the complex is composed of two ATP-binding proteins (PhnC), two transmembrane proteins (PhnE) and a solute-binding protein (PhnD).

The protein localises to the cell inner membrane. The catalysed reaction is phosphonate(out) + ATP + H2O = phosphonate(in) + ADP + phosphate + H(+). Part of the ABC transporter complex PhnCDE involved in phosphonates import. Responsible for energy coupling to the transport system. This is Phosphonates import ATP-binding protein PhnC from Bdellovibrio bacteriovorus (strain ATCC 15356 / DSM 50701 / NCIMB 9529 / HD100).